The chain runs to 221 residues: MQTPSLELKGSSFTLSVLHINSNDMAVIAAELDAKLAIAPQFFLGAPLVVNLSAIQATDFDILGLKEILTNRQLIIVGITSACPELTKQAKSIGLATVKTGKEATSQPQMPKTTKIVKQNVRSGQQIYAKNADLIIVGAVGNGAEVIADGSIHIYGTLRGKAMAGAGGDRHAVIMAQKIEAELVSIAGQYWLTENLQQNGAALSGCIRLEGESLTVESLPL.

This sequence belongs to the MinC family. In terms of assembly, interacts with MinD and FtsZ.

Cell division inhibitor that blocks the formation of polar Z ring septums. Rapidly oscillates between the poles of the cell to destabilize FtsZ filaments that have formed before they mature into polar Z rings. Prevents FtsZ polymerization. This chain is Probable septum site-determining protein MinC, found in Shewanella halifaxensis (strain HAW-EB4).